The following is a 466-amino-acid chain: Asparagine--tRNA ligase (466 aa).

It belongs to the class-II aminoacyl-tRNA synthetase family. Homodimer.

Its subcellular location is the cytoplasm. The enzyme catalyses tRNA(Asn) + L-asparagine + ATP = L-asparaginyl-tRNA(Asn) + AMP + diphosphate + H(+). This is Asparagine--tRNA ligase from Shewanella pealeana (strain ATCC 700345 / ANG-SQ1).